Consider the following 320-residue polypeptide: Protein rlx (320 aa).

Functionally, this protein is probably required for relaxation complex formation and plasmid mobilization by conjugative plasmids. The protein is Protein rlx (rlx) of Staphylococcus aureus.